A 54-amino-acid polypeptide reads, in one-letter code: Ovomucoid (54 aa).

Residues 4-54 (VDCSDYPKPACTLEYMPLCGSDNKTYGNKCNFCNAVVDSNGTLTLSHFGKC) form the Kazal-like domain. Disulfide bonds link Cys6-Cys36, Cys14-Cys33, and Cys22-Cys54. Asn43 carries an N-linked (GlcNAc...) asparagine glycan.

Its subcellular location is the secreted. This chain is Ovomucoid, found in Dendrocygna arcuata (Wandering whistling-duck).